The primary structure comprises 173 residues: Photosystem I assembly protein Ycf3 (173 aa).

TPR repeat units follow at residues 35-68 (AFAY…EEDP), 72-105 (SYIL…NPRM), and 113-146 (AVIY…WKRA).

The protein belongs to the Ycf3 family.

It is found in the cellular thylakoid membrane. Essential for the assembly of the photosystem I (PSI) complex. May act as a chaperone-like factor to guide the assembly of the PSI subunits. The polypeptide is Photosystem I assembly protein Ycf3 (Thermosynechococcus vestitus (strain NIES-2133 / IAM M-273 / BP-1)).